The primary structure comprises 399 residues: uncharacterized protein (399 aa).

Helical transmembrane passes span 19–39, 46–66, 91–111, 123–143, 146–166, 183–203, 225–247, 283–303, 307–327, 335–355, and 369–389; these read IFSI…PLFV, VNLL…LLMY, FYTI…PILG, QFEQ…IIAS, IYAK…IFIA, LLSA…ISYI, VAIL…MPIW, VLLL…LLGF, FGLD…FAYL, LFSI…YLGY, and IEYT…VYLL.

The protein localises to the host membrane. In terms of biological role, putative amino acid transporter. This is an uncharacterized protein from Saccharolobus islandicus (Sulfolobus islandicus).